The primary structure comprises 621 residues: 1-deoxy-D-xylulose-5-phosphate synthase (621 aa).

Thiamine diphosphate-binding positions include His-80 and Gly-121 to Ser-123. Asp-152 is a binding site for Mg(2+). Residues Gly-153–Ala-154, Asn-181, Tyr-288, and Glu-370 each bind thiamine diphosphate. Position 181 (Asn-181) interacts with Mg(2+).

Belongs to the transketolase family. DXPS subfamily. In terms of assembly, homodimer. The cofactor is Mg(2+). Thiamine diphosphate serves as cofactor.

The catalysed reaction is D-glyceraldehyde 3-phosphate + pyruvate + H(+) = 1-deoxy-D-xylulose 5-phosphate + CO2. Its pathway is metabolic intermediate biosynthesis; 1-deoxy-D-xylulose 5-phosphate biosynthesis; 1-deoxy-D-xylulose 5-phosphate from D-glyceraldehyde 3-phosphate and pyruvate: step 1/1. Functionally, catalyzes the acyloin condensation reaction between C atoms 2 and 3 of pyruvate and glyceraldehyde 3-phosphate to yield 1-deoxy-D-xylulose-5-phosphate (DXP). This chain is 1-deoxy-D-xylulose-5-phosphate synthase, found in Shewanella woodyi (strain ATCC 51908 / MS32).